A 115-amino-acid polypeptide reads, in one-letter code: Photosystem II reaction center Psb28 protein (115 aa).

Belongs to the Psb28 family. As to quaternary structure, part of the photosystem II complex.

The protein localises to the plastid. Its subcellular location is the chloroplast thylakoid membrane. This is Photosystem II reaction center Psb28 protein from Pyropia yezoensis (Susabi-nori).